The primary structure comprises 231 residues: 5'-methylthioadenosine/S-adenosylhomocysteine nucleosidase (231 aa).

The active-site Proton acceptor is glutamate 12. Substrate is bound by residues glycine 78, methionine 153, and methionine 174–glutamate 175. The Proton donor role is filled by aspartate 198.

This sequence belongs to the PNP/UDP phosphorylase family. MtnN subfamily.

It catalyses the reaction S-adenosyl-L-homocysteine + H2O = S-(5-deoxy-D-ribos-5-yl)-L-homocysteine + adenine. The enzyme catalyses S-methyl-5'-thioadenosine + H2O = 5-(methylsulfanyl)-D-ribose + adenine. It carries out the reaction 5'-deoxyadenosine + H2O = 5-deoxy-D-ribose + adenine. It participates in amino-acid biosynthesis; L-methionine biosynthesis via salvage pathway; S-methyl-5-thio-alpha-D-ribose 1-phosphate from S-methyl-5'-thioadenosine (hydrolase route): step 1/2. Functionally, catalyzes the irreversible cleavage of the glycosidic bond in both 5'-methylthioadenosine (MTA) and S-adenosylhomocysteine (SAH/AdoHcy) to adenine and the corresponding thioribose, 5'-methylthioribose and S-ribosylhomocysteine, respectively. Also cleaves 5'-deoxyadenosine, a toxic by-product of radical S-adenosylmethionine (SAM) enzymes, into 5-deoxyribose and adenine. The sequence is that of 5'-methylthioadenosine/S-adenosylhomocysteine nucleosidase from Bacillus anthracis (strain A0248).